The following is a 557-amino-acid chain: Dihydroxy-acid dehydratase (557 aa).

Asp-78 contributes to the Mg(2+) binding site. Residue Cys-119 coordinates [2Fe-2S] cluster. Residues Asp-120 and Lys-121 each contribute to the Mg(2+) site. Lys-121 is modified (N6-carboxylysine). Cys-192 contributes to the [2Fe-2S] cluster binding site. Glu-442 serves as a coordination point for Mg(2+). The Proton acceptor role is filled by Ser-468.

The protein belongs to the IlvD/Edd family. Homodimer. The cofactor is [2Fe-2S] cluster. It depends on Mg(2+) as a cofactor.

It catalyses the reaction (2R)-2,3-dihydroxy-3-methylbutanoate = 3-methyl-2-oxobutanoate + H2O. The enzyme catalyses (2R,3R)-2,3-dihydroxy-3-methylpentanoate = (S)-3-methyl-2-oxopentanoate + H2O. It participates in amino-acid biosynthesis; L-isoleucine biosynthesis; L-isoleucine from 2-oxobutanoate: step 3/4. Its pathway is amino-acid biosynthesis; L-valine biosynthesis; L-valine from pyruvate: step 3/4. Functions in the biosynthesis of branched-chain amino acids. Catalyzes the dehydration of (2R,3R)-2,3-dihydroxy-3-methylpentanoate (2,3-dihydroxy-3-methylvalerate) into 2-oxo-3-methylpentanoate (2-oxo-3-methylvalerate) and of (2R)-2,3-dihydroxy-3-methylbutanoate (2,3-dihydroxyisovalerate) into 2-oxo-3-methylbutanoate (2-oxoisovalerate), the penultimate precursor to L-isoleucine and L-valine, respectively. The protein is Dihydroxy-acid dehydratase of Bacillus mycoides (strain KBAB4) (Bacillus weihenstephanensis).